Here is a 288-residue protein sequence, read N- to C-terminus: Large ribosomal subunit protein uL2 (288 aa).

Residues 29–43 are compositionally biased toward basic and acidic residues; sequence PEKSLTRGFKRDKGR. Disordered regions lie at residues 29 to 59 and 210 to 288; these read PEKS…GGHK and GRNR…GRQS. Basic residues-rich tracts occupy residues 210 to 221 and 272 to 288; these read GRNRWKGRRPKV and VRRR…GRQS.

It belongs to the universal ribosomal protein uL2 family. Part of the 50S ribosomal subunit. Forms a bridge to the 30S subunit in the 70S ribosome.

Its function is as follows. One of the primary rRNA binding proteins. Required for association of the 30S and 50S subunits to form the 70S ribosome, for tRNA binding and peptide bond formation. It has been suggested to have peptidyltransferase activity; this is somewhat controversial. Makes several contacts with the 16S rRNA in the 70S ribosome. The protein is Large ribosomal subunit protein uL2 of Thermosynechococcus vestitus (strain NIES-2133 / IAM M-273 / BP-1).